Consider the following 339-residue polypeptide: Probable thylakoid lumen protein sll0997 (339 aa).

An N-terminal signal peptide occupies residues 1–26; sequence MAPYQSFHIGLLGLALASVWPLSACA.

Its subcellular location is the cellular thylakoid lumen. The polypeptide is Probable thylakoid lumen protein sll0997 (Synechocystis sp. (strain ATCC 27184 / PCC 6803 / Kazusa)).